Reading from the N-terminus, the 287-residue chain is Protease HtpX (287 aa).

The next 2 membrane-spanning stretches (helical) occupy residues 4–24 (VMLF…VLNI) and 36–56 (LSGL…ISLM). Residue His143 participates in Zn(2+) binding. Glu144 is a catalytic residue. Residue His147 coordinates Zn(2+). Helical transmembrane passes span 158–178 (LMQG…ANIV) and 192–212 (MVYF…ASFI). Glu221 is a binding site for Zn(2+).

Belongs to the peptidase M48B family. The cofactor is Zn(2+).

The protein localises to the cell inner membrane. The polypeptide is Protease HtpX (Vibrio atlanticus (strain LGP32) (Vibrio splendidus (strain Mel32))).